Reading from the N-terminus, the 298-residue chain is Estradiol 17-beta-dehydrogenase 11 (298 aa).

Positions 1–21 (MKYLLDLILLLPLLIVFSIES) are cleaved as a signal peptide. 40-64 (LITGAGHGIGRLTAYEFAKLNTKLV) lines the NADP(+) pocket. Ser172 is a binding site for substrate. Tyr185 functions as the Proton acceptor in the catalytic mechanism.

Belongs to the short-chain dehydrogenases/reductases (SDR) family. 17-beta-HSD 3 subfamily. As to expression, expressed in the liver (at protein level). Also expressed in the intestine and, at much lower levels, in the kidney.

Its subcellular location is the endoplasmic reticulum. It localises to the lipid droplet. It catalyses the reaction 17beta-estradiol + NAD(+) = estrone + NADH + H(+). The enzyme catalyses 17beta-estradiol + NADP(+) = estrone + NADPH + H(+). In terms of biological role, can convert androstan-3-alpha,17-beta-diol (3-alpha-diol) to androsterone in vitro, suggesting that it may participate in androgen metabolism during steroidogenesis. May act by metabolizing compounds that stimulate steroid synthesis and/or by generating metabolites that inhibit it. Has no activity toward DHEA (dehydroepiandrosterone), or A-dione (4-androste-3,17-dione), and only a slight activity toward testosterone to A-dione. The sequence is that of Estradiol 17-beta-dehydrogenase 11 (Hsd17b11) from Mus musculus (Mouse).